The following is a 305-amino-acid chain: Phosphopantetheine adenylyltransferase (305 aa).

This sequence belongs to the eukaryotic CoaD family.

It is found in the cytoplasm. It localises to the nucleus. It catalyses the reaction (R)-4'-phosphopantetheine + ATP + H(+) = 3'-dephospho-CoA + diphosphate. Its function is as follows. Reversibly transfers an adenylyl group from ATP to 4'-phosphopantetheine, yielding dephospho-CoA (dPCoA) and pyrophosphate. Plays a role in the physiological regulation of the intracellular CoA concentration. The polypeptide is Phosphopantetheine adenylyltransferase (CAB4) (Saccharomyces cerevisiae (strain ATCC 204508 / S288c) (Baker's yeast)).